A 677-amino-acid chain; its full sequence is UvrABC system protein B (677 aa).

Positions 24-412 (EGVLEGVPAQ…EGIVVEQVIR (389 aa)) constitute a Helicase ATP-binding domain. An ATP-binding site is contributed by 37 to 44 (GVTGSGKT). The Beta-hairpin motif lies at 90-113 (YYDYYQPEAYLPSSDTYIEKDLAI). Residues 429-591 (QIDDLMEEIQ…ITPQQIKKAR (163 aa)) form the Helicase C-terminal domain. One can recognise a UVR domain in the interval 635–670 (EKSMERTRKLMQEAAKKLEFIEAAQYRDELLKMEDL).

This sequence belongs to the UvrB family. As to quaternary structure, forms a heterotetramer with UvrA during the search for lesions. Interacts with UvrC in an incision complex.

Its subcellular location is the cytoplasm. Functionally, the UvrABC repair system catalyzes the recognition and processing of DNA lesions. A damage recognition complex composed of 2 UvrA and 2 UvrB subunits scans DNA for abnormalities. Upon binding of the UvrA(2)B(2) complex to a putative damaged site, the DNA wraps around one UvrB monomer. DNA wrap is dependent on ATP binding by UvrB and probably causes local melting of the DNA helix, facilitating insertion of UvrB beta-hairpin between the DNA strands. Then UvrB probes one DNA strand for the presence of a lesion. If a lesion is found the UvrA subunits dissociate and the UvrB-DNA preincision complex is formed. This complex is subsequently bound by UvrC and the second UvrB is released. If no lesion is found, the DNA wraps around the other UvrB subunit that will check the other stand for damage. This is UvrABC system protein B from Bacteroides fragilis (strain YCH46).